Consider the following 274-residue polypeptide: MAIHLYKTSTPSTRNGAVDSQVKSNPRNNLIYGQHRCGKGRNARGIITAGHRGGGHKRLYRKIDFRRNEKDIYGRIVTIEYDPNRNAYICLIHYGDGEKRYILHPRGAIIGDTIVSGTEVPIKMGNALPLTDMPLGTAIHNIEITLGKGGQLARAAGAVAKLIAKEGKSATLKLPSGEVRLISKNCSATVGQVGNVGANQKSLGRAGSKCWLGKRPVVRGVVMNPVDHPHGGGEGRAPIGRKRPATPWGYPALGRRSRKRNKYSDNLILRRRTK.

2 disordered regions span residues 1-25 and 223-274; these read MAIH…VKSN and MNPV…RRTK.

It belongs to the universal ribosomal protein uL2 family. Part of the 50S ribosomal subunit.

The protein localises to the plastid. It is found in the chloroplast. The chain is Large ribosomal subunit protein uL2cz/uL2cy (rpl2-A) from Citrus sinensis (Sweet orange).